The sequence spans 2090 residues: Nuclear pore complex protein Nup214 (2090 aa).

G2 is modified (N-acetylglycine). S30 carries the phosphoserine modification. Blade repeat units follow at residues 41-93, 94-150, 151-193, 194-239, 240-303, 304-359, and 360-404; these read LLAV…PMKF, PIHH…DAGG, MVID…PSTV, AVTS…ESDH, PVRV…ERQH, HYYL…KSDD, and SLPM…FYMI. Positions 41–404 are seven-bladed beta propeller; sequence LLAVSNKYGL…DGVLCPFYMI (364 aa). Positions 236–1418 are 44 X 2 AA repeats of F-G; the sequence is ESDHPVRVLD…AVFGSLPVTS (1183 aa). T416 is subject to Phosphothreonine. Phosphoserine is present on residues S421, S430, and S433. A disordered region spans residues 422 to 460; that stretch reads LEGERQPKSPGSTPTTPTSSQAPQKLDASAAAAPASLPP. Over residues 429–441 the composition is skewed to low complexity; that stretch reads KSPGSTPTTPTSS. Phosphothreonine occurs at positions 434, 437, and 439. Positions 450–586 are (Microbial infection) Binds human adenovirus 5 (HAdV-5) protein L3 (hexon); sequence SAAAAPASLP…PPSTSAVKVN (137 aa). The tract at residues 481-2076 is 11 X 5 AA approximate repeats; that stretch reads VFSFGSSSLK…GSGTGGFSFG (1596 aa). Copy 1 of the repeat occupies 484 to 485; it reads FG. 2 stretches are compositionally biased toward low complexity: residues 489 to 513 and 524 to 536; these read LKSSATVTGEPPSYSSGSDSSKAAP and PPSKASLAPTPAA. The tract at residues 489-536 is disordered; the sequence is LKSSATVTGEPPSYSSGSDSSKAAPGPGPSTFSFVPPSKASLAPTPAA. The stretch at 548-549 is repeat 2; it reads FG. Low complexity-rich tracts occupy residues 597-629 and 637-658; these read STPVSSSQSAPPMSPFSSASKPAASGPLSHPTP and VPLKSSVLPSPSGRSAQGSSSP. A disordered region spans residues 597 to 700; it reads STPVSSSQSA…KQGHQWKDSD (104 aa). 3 positions are modified to phosphoserine: S651, S657, and S666. Phosphothreonine is present on T670. S678 bears the Phosphoserine mark. Positions 680 to 1209 form a coiled coil; sequence QAKSLQPAVA…VTSTPSASGQ (530 aa). The segment covering 691–700 has biased composition (basic and acidic residues); it reads KQGHQWKDSD. 2 leucine-zipper regions span residues 740-768 and 861-882; these read LRTESDDLHTFLLEIKETTESLHGDISSL and LANNREIINQQRKRLNHLVDSL. S760 carries the phosphoserine modification. Phosphoserine occurs at positions 940, 970, 974, and 989. The disordered stretch occupies residues 987–1009; that stretch reads TSSVSQSLESEDARTSCKDDEAV. Residues 997–1007 show a composition bias toward basic and acidic residues; sequence EDARTSCKDDE. The residue at position 1021 (T1021) is a Phosphothreonine. 4 positions are modified to phosphoserine: S1023, S1045, S1056, and S1081. Polar residues predominate over residues 1128 to 1149; sequence LKNNPATPSTAMGSSVPYSTAK. Residues 1128 to 1152 form a disordered region; the sequence is LKNNPATPSTAMGSSVPYSTAKTPH. Phosphothreonine occurs at positions 1134, 1150, and 1156. 2 stretches are compositionally biased toward polar residues: residues 1168-1188 and 1199-1213; these read LINSLKPSGPTPASGQLSSGD and AVTSTPSASGQFSKP. The segment at 1168 to 1213 is disordered; sequence LINSLKPSGPTPASGQLSSGDKASGTAKIETAVTSTPSASGQFSKP. S1181 is modified (phosphoserine). Copy 3 of the repeat occupies 1225–1226; sequence FG. Composition is skewed to polar residues over residues 1234–1254 and 1273–1285; these read SNFTAAQGATPSTKESSQPDA and PPSGITSASNTTP. 2 disordered regions span residues 1234-1316 and 1337-1408; these read SNFT…PPSK and LRVG…TSST. Residues 1288-1299 show a composition bias toward low complexity; the sequence is PAASSSRPVAPS. Residues 1301 to 1310 are compositionally biased toward polar residues; that stretch reads TALSTTSSKL. T1312 is subject to Phosphothreonine. Over residues 1347–1368 the composition is skewed to polar residues; the sequence is KPTNKASSTSLTSTQPTKTSGV. S1353 bears the Phosphoserine mark. Low complexity predominate over residues 1386–1408; the sequence is PPVTSSATTTSVAPPAATSTSST. The segment at 1409-2084 is 18 X 4 AA approximate repeats; that stretch reads AVFGSLPVTS…FGSNNSSVQG (676 aa). 4 tandem repeats follow at residues 1411–1412, 1427–1428, 1441–1442, and 1473–1474. Positions 1427–2085 are 11 X 3 AA approximate repeats; that stretch reads FGGTSLSAGK…GSNNSSVQGF (659 aa). Polar residues predominate over residues 1438-1450; sequence SFSFGSQQTNSTV. The interval 1438–1467 is disordered; the sequence is SFSFGSQQTNSTVPPSAPPPTTAATPLPTS. 2 stretches are compositionally biased toward low complexity: residues 1479 to 1489 and 1508 to 1527; these read SATTPSLPMSA and SEVSASAASLLEEQQSAQLP. Residues 1479–1539 are disordered; sequence SATTPSLPMS…PPQTSDSVKK (61 aa). A Glycyl lysine isopeptide (Lys-Gly) (interchain with G-Cter in SUMO2) cross-link involves residue K1538. Tandem repeats lie at residues 1635–1636, 1674–1675, 1686–1687, 1713–1714, 1721–1722, 1726–1727, 1732–1733, 1756–1757, 1772–1773, 1786–1787, 1798–1799, 1806–1807, 1812–1813, 1819–1820, 1842–1843, 1851–1852, 1862–1863, and 1874–1875. The segment at 1884–1903 is disordered; the sequence is GFFSGLGGKPSQDAANKNPF. 5 consecutive repeat copies span residues 1910–1911, 1922–1923, 1930–1931, 1938–1939, and 1959–1960. Residue S1963 is modified to Phosphoserine. 3 repeat units span residues 1970 to 1971, 1976 to 1977, and 1982 to 1983. Position 1985 is a phosphoserine (S1985). Repeat copies occupy residues 1988–1989, 1994–1995, 2012–2013, 2024–2025, 2026–2027, 2035–2036, 2046–2047, 2056–2057, 2066–2067, 2075–2076, and 2085–2086.

In terms of assembly, homodimer. Part of the nuclear pore complex (NPC). Interacts with NUP88. Interacts with ZFP36; this interaction increases upon lipopolysaccharide (LPS) stimulation. Interacts with DDX19. Interacts with XPO1. Interacts with XPO5. (Microbial infection) Interacts with human herpes virus 1 (HHV-1) protein UL25; this interaction might be essential to the capsid docking onto the host nuclear pore. As to quaternary structure, (Microbial infection) Interacts (via N-terminus) with human adenovirus 5 (HAdV-5) protein L3 (hexon); this interaction might be essential for the release of the virus genome to the nucleus. Post-translationally, probably glycosylated as it reacts with wheat germ agglutinin (WGA). Expressed in thymus, spleen, bone marrow, kidney, brain and testis, but hardly in all other tissues or in whole embryos during development.

The protein localises to the nucleus. Its subcellular location is the nuclear pore complex. Part of the nuclear pore complex. Has a critical role in nucleocytoplasmic transport. May serve as a docking site in the receptor-mediated import of substrates across the nuclear pore complex. In terms of biological role, (Microbial infection) Required for capsid disassembly of the human adenovirus 5 (HadV-5) leading to release of the viral genome to the nucleus (in vitro). The protein is Nuclear pore complex protein Nup214 (NUP214) of Homo sapiens (Human).